Reading from the N-terminus, the 212-residue chain is Secreted and transmembrane protein 1b (212 aa).

The first 28 residues, 1 to 28, serve as a signal peptide directing secretion; sequence MLAYSVTSSGLFPRMLWALLLLAASLNA. Over 29–160 the chain is Extracellular; it reads HNDVWDEPCC…DKPPTAVRTE (132 aa). The cysteines at positions 38 and 55 are disulfide-linked. N-linked (GlcNAc...) asparagine glycosylation is found at asparagine 56, asparagine 85, asparagine 114, and asparagine 130. A helical membrane pass occupies residues 161–181; that stretch reads VIIIIAIATTIIITGIGVFVW. The Cytoplasmic segment spans residues 182–212; it reads YKQFPVAPQIQMSVPCLIHGSPGIPYLTLPP.

This sequence belongs to the SECTM family. As to quaternary structure, interacts with CD7.

Its subcellular location is the cell membrane. It is found in the secreted. May be involved in thymocyte signaling. The sequence is that of Secreted and transmembrane protein 1b (Sectm1b) from Mus musculus (Mouse).